A 2281-amino-acid chain; its full sequence is Protein Ycf2 (2281 aa).

1635–1642 (GSIGSGRS) provides a ligand contact to ATP.

This sequence belongs to the Ycf2 family.

The protein resides in the plastid. Its subcellular location is the chloroplast stroma. Its function is as follows. Probable ATPase of unknown function. Its presence in a non-photosynthetic plant (Epifagus virginiana) and experiments in tobacco indicate that it has an essential function which is probably not related to photosynthesis. The sequence is that of Protein Ycf2 from Coffea arabica (Arabian coffee).